Reading from the N-terminus, the 384-residue chain is MAP kinase-activated protein kinase 3 (384 aa).

M1 is modified (N-acetylmethionine). A disordered region spans residues 1–33 (MDGETAGEKGSLVPQPGALGAPALGGAPAPGVR). Positions 14-31 (PQPGALGAPALGGAPAPG) are enriched in low complexity. The 261-residue stretch at 46–306 (QLSKQVLGLG…IMQFMNHPWI (261 aa)) folds into the Protein kinase domain. ATP-binding positions include 52-60 (LGLGVNGKV) and K75. Residue D168 is the Proton acceptor of the active site. T203 carries the post-translational modification Phosphothreonine; by MAPK14. Phosphoserine; by MAPK14 is present on S253. S309 carries the post-translational modification Phosphoserine; by autocatalysis. Residues 309–345 (SMEVPQTPLHTARVLEEDKDHWDDVKEEMTSALATMR) form an autoinhibitory helix region. T315 bears the Phosphothreonine; by MAPK14 mark. A Nuclear export signal (NES) motif is present at residues 337 to 346 (MTSALATMRV). Positions 347 to 371 (DYDQVKIKDLKTSNNRLLNKRRKKQ) are p38 MAPK-binding site. 2 consecutive short sequence motifs (bipartite nuclear localization signal) follow at residues 352-355 (KIKD) and 366-370 (KRRKK). The interval 359-384 (SNNRLLNKRRKKQGGSSSASPGCNNQ) is disordered. The segment covering 372–384 (GGSSSASPGCNNQ) has biased composition (polar residues).

It belongs to the protein kinase superfamily. CAMK Ser/Thr protein kinase family. In terms of assembly, heterodimer with p38-alpha/MAPK14. The heterodimer with p38-alpha/MAPK14 forms a stable complex: molecules are positioned 'face to face' so that the ATP-binding sites of both kinases are at the heterodimer interface. Interacts with TCF3 and with polycomb proteins, such as PCH2 and BMI1/PCGF4. Post-translationally, phosphorylated and activated by MAPK1/ERK2 and MAPK3/ERK1. Phosphorylated and activated by MAP kinase p38-alpha/MAPK14 at Thr-203, Ser-253 and Thr-315.

The protein localises to the nucleus. Its subcellular location is the cytoplasm. The catalysed reaction is L-seryl-[protein] + ATP = O-phospho-L-seryl-[protein] + ADP + H(+). It carries out the reaction L-threonyl-[protein] + ATP = O-phospho-L-threonyl-[protein] + ADP + H(+). With respect to regulation, activated following phosphorylation by p38-alpha/MAPK14 following various stresses. Inhibited by ligand 5B (2'-[2-(1,3-benzodioxol-5-yl)pyrimidin-4-yl]-5',6'-dihydrospiro[piperidine-4,7'-pyrrolo[3,2-c]pyridin]- 4'(1'h)-one) and ligand P4O (2-[2-(2-fluorophenyl)pyridin-4-yl]-1,5,6,7-tetrahydro- 4h-pyrrolo[3,2-c]pyridin-4-one), 2 ATP-competitive inhibitors. Its function is as follows. Stress-activated serine/threonine-protein kinase involved in cytokines production, endocytosis, cell migration, chromatin remodeling and transcriptional regulation. Following stress, it is phosphorylated and activated by MAP kinase p38-alpha/MAPK14, leading to phosphorylation of substrates. Phosphorylates serine in the peptide sequence, Hyd-X-R-X(2)-S, where Hyd is a large hydrophobic residue. MAPKAPK2 and MAPKAPK3, share the same function and substrate specificity, but MAPKAPK3 kinase activity and level in protein expression are lower compared to MAPKAPK2. Phosphorylates HSP27/HSPB1, KRT18, KRT20, RCSD1, RPS6KA3, TAB3 and TTP/ZFP36. Mediates phosphorylation of HSP27/HSPB1 in response to stress, leading to dissociate HSP27/HSPB1 from large small heat-shock protein (sHsps) oligomers and impair their chaperone activities and ability to protect against oxidative stress effectively. Involved in inflammatory response by regulating tumor necrosis factor (TNF) and IL6 production post-transcriptionally: acts by phosphorylating AU-rich elements (AREs)-binding proteins, such as TTP/ZFP36, leading to regulate the stability and translation of TNF and IL6 mRNAs. Phosphorylation of TTP/ZFP36, a major post-transcriptional regulator of TNF, promotes its binding to 14-3-3 proteins and reduces its ARE mRNA affinity leading to inhibition of dependent degradation of ARE-containing transcript. Involved in toll-like receptor signaling pathway (TLR) in dendritic cells: required for acute TLR-induced macropinocytosis by phosphorylating and activating RPS6KA3. Also acts as a modulator of Polycomb-mediated repression. The chain is MAP kinase-activated protein kinase 3 (Mapkapk3) from Rattus norvegicus (Rat).